We begin with the raw amino-acid sequence, 537 residues long: 2-succinyl-5-enolpyruvyl-6-hydroxy-3-cyclohexene-1-carboxylate synthase (537 aa).

This sequence belongs to the TPP enzyme family. MenD subfamily. In terms of assembly, homodimer. Requires Mg(2+) as cofactor. The cofactor is Mn(2+). Thiamine diphosphate is required as a cofactor.

The catalysed reaction is isochorismate + 2-oxoglutarate + H(+) = 5-enolpyruvoyl-6-hydroxy-2-succinyl-cyclohex-3-ene-1-carboxylate + CO2. Its pathway is quinol/quinone metabolism; 1,4-dihydroxy-2-naphthoate biosynthesis; 1,4-dihydroxy-2-naphthoate from chorismate: step 2/7. The protein operates within quinol/quinone metabolism; menaquinone biosynthesis. In terms of biological role, catalyzes the thiamine diphosphate-dependent decarboxylation of 2-oxoglutarate and the subsequent addition of the resulting succinic semialdehyde-thiamine pyrophosphate anion to isochorismate to yield 2-succinyl-5-enolpyruvyl-6-hydroxy-3-cyclohexene-1-carboxylate (SEPHCHC). The polypeptide is 2-succinyl-5-enolpyruvyl-6-hydroxy-3-cyclohexene-1-carboxylate synthase (Dechloromonas aromatica (strain RCB)).